The primary structure comprises 203 residues: ATP-dependent Clp protease proteolytic subunit 2 (203 aa).

Catalysis depends on Ser98, which acts as the Nucleophile. His123 is a catalytic residue.

The protein belongs to the peptidase S14 family. As to quaternary structure, fourteen ClpP subunits assemble into 2 heptameric rings which stack back to back to give a disk-like structure with a central cavity, resembling the structure of eukaryotic proteasomes.

It localises to the cytoplasm. It carries out the reaction Hydrolysis of proteins to small peptides in the presence of ATP and magnesium. alpha-casein is the usual test substrate. In the absence of ATP, only oligopeptides shorter than five residues are hydrolyzed (such as succinyl-Leu-Tyr-|-NHMec, and Leu-Tyr-Leu-|-Tyr-Trp, in which cleavage of the -Tyr-|-Leu- and -Tyr-|-Trp bonds also occurs).. Functionally, cleaves peptides in various proteins in a process that requires ATP hydrolysis. Has a chymotrypsin-like activity. Plays a major role in the degradation of misfolded proteins. The sequence is that of ATP-dependent Clp protease proteolytic subunit 2 from Chlamydia pneumoniae (Chlamydophila pneumoniae).